The chain runs to 420 residues: Nucleobindin-2 (420 aa).

The first 24 residues, 1-24 (MRWRTIQARYCFLLVPCVLTALEA), serve as a signal peptide directing secretion. The DNA-binding element occupies 171 to 223 (RTRHEEFKKYEMMKEHERREYLKTLSEEKRKEEEAKFAEMKRKHEDHPKVNHP). A disordered region spans residues 194–225 (TLSEEKRKEEEAKFAEMKRKHEDHPKVNHPGS). A binds to necdin region spans residues 213–420 (KHEDHPKVNH…AGELKFEPHT (208 aa)). EF-hand domains are found at residues 241-276 (PNDF…ELDK) and 293-328 (ERLR…KEFL). Ca(2+) is bound by residues aspartate 254, asparagine 256, aspartate 258, glutamate 265, aspartate 306, asparagine 308, aspartate 310, and glutamate 317. Positions 304-334 (EIDNNKDRLVTLEEFLRATEKKEFLEPDSWE) match the GBA motif. Serine 332 carries the phosphoserine modification. Residues 366-386 (DELQKQKEELQRQHDHLEAQK) are compositionally biased toward basic and acidic residues. Positions 366 to 420 (DELQKQKEELQRQHDHLEAQKQEYQQAVQQLEQKKFQQGIAPSGPAGELKFEPHT) are disordered. Positions 387–396 (QEYQQAVQQL) are enriched in low complexity.

It belongs to the nucleobindin family. Interacts (via GBA motif) with guanine nucleotide-binding protein G(i) alpha subunit GNAI3. Preferentially interacts with inactive rather than active GNAI3. Interaction with GNAI3 is inhibited when NUCB2 binds calcium, probably due to a conformational change which renders the GBA motif inaccessible. Binds to the postmitotic growth suppressor NDN; coexpression abolishes NUCB2 secretion. Interacts with MC4R.

The protein resides in the golgi apparatus. Its subcellular location is the endoplasmic reticulum. The protein localises to the nucleus envelope. It is found in the membrane. It localises to the cytoplasm. The protein resides in the secreted. Functionally, calcium-binding protein which may have a role in calcium homeostasis. Acts as a non-receptor guanine nucleotide exchange factor which binds to and activates guanine nucleotide-binding protein (G-protein) alpha subunit GNAI3. Its function is as follows. Anorexigenic peptide, seems to play an important role in hypothalamic pathways regulating food intake and energy homeostasis, acting in a leptin-independent manner. May also exert hypertensive roles and modulate blood pressure through directly acting on peripheral arterial resistance. In intestinal epithelial cells, plays a role in the inhibition of hepatic glucose production via MC4R receptor leading to increased cyclic adenosine monophosphate (cAMP) levels and glucagon-like peptide 1 (GLP-1) secretion. The protein is Nucleobindin-2 (Nucb2) of Rattus norvegicus (Rat).